The following is a 72-amino-acid chain: Translation initiation factor IF-1 1 (72 aa).

An S1-like domain is found at 1 to 72; sequence MSKEDVIQMQ…TKGRIVFRAK (72 aa).

This sequence belongs to the IF-1 family. As to quaternary structure, component of the 30S ribosomal translation pre-initiation complex which assembles on the 30S ribosome in the order IF-2 and IF-3, IF-1 and N-formylmethionyl-tRNA(fMet); mRNA recruitment can occur at any time during PIC assembly.

Its subcellular location is the cytoplasm. Its function is as follows. One of the essential components for the initiation of protein synthesis. Stabilizes the binding of IF-2 and IF-3 on the 30S subunit to which N-formylmethionyl-tRNA(fMet) subsequently binds. Helps modulate mRNA selection, yielding the 30S pre-initiation complex (PIC). Upon addition of the 50S ribosomal subunit IF-1, IF-2 and IF-3 are released leaving the mature 70S translation initiation complex. The sequence is that of Translation initiation factor IF-1 1 from Thiobacillus denitrificans (strain ATCC 25259 / T1).